Here is a 146-residue protein sequence, read N- to C-terminus: Zinc metalloproteinase-disintegrin salmosin-3 (146 aa).

In terms of domain architecture, Peptidase M12B spans 1-57; the sequence is SCPCDANSCIMSATLSNEPSSRFSDCSFSLPSRFSDCSFNQYSSDIIHYHECLLNEP. 9 disulfides stabilise this stretch: Cys2/Cys37, Cys4/Cys9, Cys68/Cys87, Cys79/Cys97, Cys81/Cys92, Cys91/Cys114, Cys105/Cys111, Cys110/Cys135, and Cys123/Cys142. Residues 65 to 146 form the Disintegrin domain; that stretch reads PPVCGNYYPE…GQSGVCPRNT (82 aa). A Cell attachment site motif is present at residues 127 to 129; sequence RGD.

The protein belongs to the venom metalloproteinase (M12B) family. P-II subfamily. P-IIb sub-subfamily. Monomer (disintegrin). Zn(2+) is required as a cofactor. In terms of tissue distribution, expressed by the venom gland.

It is found in the secreted. Functionally, snake venom zinc metalloproteinase that inhibits ADP-induced platelet aggregation (probably by binding integrin alpha-IIb/beta-3 (ITGA2B/ITGB3)) and degrades fibrinogen. This Gloydius brevicauda (Korean slamosa snake) protein is Zinc metalloproteinase-disintegrin salmosin-3.